The following is a 452-amino-acid chain: Selenide, water dikinase 2 (452 aa).

N-acetylalanine is present on Ala-2. The residue at position 49 (Ser-49) is a Phosphoserine. Residue Sec-63 is part of the active site. A non-standard amino acid (selenocysteine) is located at residue Sec-63. Lys-66 provides a ligand contact to ATP. The disordered stretch occupies residues 86-111; that stretch reads PPLTSGLVGGQEETVQEGGLSTRPGP. Residues 95-105 show a composition bias toward low complexity; that stretch reads GQEETVQEGGL. ATP-binding positions include 121–123, Asp-141, Asp-164, and 215–218; these read GMD and GGQT. Asp-123 provides a ligand contact to Mg(2+). Asp-164 is a Mg(2+) binding site. Asp-319 lines the Mg(2+) pocket.

The protein belongs to the selenophosphate synthase 1 family. Class I subfamily. Homodimer. The cofactor is Mg(2+). In terms of processing, truncated SEPHS2 proteins produced by failed UGA/Sec decoding are ubiquitinated by the CRL2(KLHDC3) complex, which recognizes the glycine (Gly) at the C-terminus of truncated SEPHS2 proteins.

It catalyses the reaction hydrogenselenide + ATP + H2O = selenophosphate + AMP + phosphate + 2 H(+). In terms of biological role, synthesizes selenophosphate from selenide and ATP. The polypeptide is Selenide, water dikinase 2 (Sephs2) (Mus musculus (Mouse)).